The primary structure comprises 295 residues: MITIRIGTRPSRLAVRQAEIVASAIRHAGYEVEIVKYRSEGDSDLKSPLYSIGKTGVFVERLNSLILSGDIDAAVHSAKDIPYEIDRRLRISAVMPRGRFEDALVSENPLSKLPPGSVIGTSSLRRRYQILYQRKDVKVSNIRGNVDTRIEKMRSEGMAGIVMALAAIDRLELNLRYWPFDPEKFVPAPNQGIIAVVSEDGSKASEVLSSINDADTYDDMMAERSITQGLKLGCSTPVGILSRHTGKGMRILAQFFAMDGSDMMMFDQHVDGLDDVDGIVSYIRENLPEEYGYKL.

At C234 the chain carries S-(dipyrrolylmethanemethyl)cysteine.

Belongs to the HMBS family. It depends on dipyrromethane as a cofactor.

The enzyme catalyses 4 porphobilinogen + H2O = hydroxymethylbilane + 4 NH4(+). Its pathway is porphyrin-containing compound metabolism; protoporphyrin-IX biosynthesis; coproporphyrinogen-III from 5-aminolevulinate: step 2/4. Its function is as follows. Tetrapolymerization of the monopyrrole PBG into the hydroxymethylbilane pre-uroporphyrinogen in several discrete steps. This is Probable porphobilinogen deaminase (hemC) from Thermoplasma acidophilum (strain ATCC 25905 / DSM 1728 / JCM 9062 / NBRC 15155 / AMRC-C165).